The following is a 338-amino-acid chain: Sesquiterpene synthase 2 (338 aa).

The Mg(2+) site is built by aspartate 93, asparagine 228, serine 232, and glutamate 236. The DDXXD motif signature appears at 93-97 (DNISD). Positions 228-236 (NDIFSYNVE) match the NSE/DTE motif motif. (2E,6E)-farnesyl diphosphate contacts are provided by arginine 316 and tyrosine 317.

The protein belongs to the terpene synthase family. Requires Mg(2+) as cofactor.

It catalyses the reaction (2E,6E)-farnesyl diphosphate = alpha-copaene + diphosphate. It carries out the reaction (2E,6E)-farnesyl diphosphate = beta-copaene + diphosphate. The catalysed reaction is (2E,6E)-farnesyl diphosphate = alpha-muurolene + diphosphate. The enzyme catalyses (2E,6E)-farnesyl diphosphate = gamma-muurolene + diphosphate. It catalyses the reaction (2E,6E)-farnesyl diphosphate = delta-cadinene + diphosphate. In terms of biological role, terpene cyclase that catalyzes the cyclization of farnesyl diphosphate (FPP) to various sesquiterpenes, including alpha-copaene, beta-copaene, beta-elemene, alpha-muurolene, gamma-muurolene and delta-cadinene. In Postia placenta (strain ATCC 44394 / Madison 698-R) (Brown rot fungus), this protein is Sesquiterpene synthase 2.